The following is a 272-amino-acid chain: Shikimate dehydrogenase (NADP(+)) (272 aa).

Residues 14-16 and T61 contribute to the shikimate site; that span reads SKS. The active-site Proton acceptor is K65. Position 77 (E77) interacts with NADP(+). 2 residues coordinate shikimate: N86 and D102. NADP(+)-binding positions include 126 to 130, 149 to 154, and M213; these read GAGGA and NRTQEK. Residue Y215 coordinates shikimate. Residue G237 coordinates NADP(+).

It belongs to the shikimate dehydrogenase family. As to quaternary structure, homodimer.

The enzyme catalyses shikimate + NADP(+) = 3-dehydroshikimate + NADPH + H(+). The protein operates within metabolic intermediate biosynthesis; chorismate biosynthesis; chorismate from D-erythrose 4-phosphate and phosphoenolpyruvate: step 4/7. In terms of biological role, involved in the biosynthesis of the chorismate, which leads to the biosynthesis of aromatic amino acids. Catalyzes the reversible NADPH linked reduction of 3-dehydroshikimate (DHSA) to yield shikimate (SA). This Erwinia tasmaniensis (strain DSM 17950 / CFBP 7177 / CIP 109463 / NCPPB 4357 / Et1/99) protein is Shikimate dehydrogenase (NADP(+)).